The chain runs to 1387 residues: DNA-directed RNA polymerase subunit beta'' (1387 aa).

4 residues coordinate Zn(2+): cysteine 224, cysteine 295, cysteine 302, and cysteine 305.

Belongs to the RNA polymerase beta' chain family. RpoC2 subfamily. In plastids the minimal PEP RNA polymerase catalytic core is composed of four subunits: alpha, beta, beta', and beta''. When a (nuclear-encoded) sigma factor is associated with the core the holoenzyme is formed, which can initiate transcription. Requires Zn(2+) as cofactor.

It localises to the plastid. It is found in the chloroplast. It catalyses the reaction RNA(n) + a ribonucleoside 5'-triphosphate = RNA(n+1) + diphosphate. Its function is as follows. DNA-dependent RNA polymerase catalyzes the transcription of DNA into RNA using the four ribonucleoside triphosphates as substrates. The polypeptide is DNA-directed RNA polymerase subunit beta'' (Panax ginseng (Korean ginseng)).